Reading from the N-terminus, the 329-residue chain is Cytosolic arginine sensor for mTORC1 subunit 2 (329 aa).

ACT domains lie at 72-139 and 262-322; these read ADAT…MHTL and ELWK…NALQ.

It belongs to the GATS family. In terms of assembly, may form homodimers and heterodimers.

It is found in the cytoplasm. It localises to the cytosol. Functions as a negative regulator of the TORC1 signaling pathway. The chain is Cytosolic arginine sensor for mTORC1 subunit 2 from Xenopus tropicalis (Western clawed frog).